We begin with the raw amino-acid sequence, 230 residues long: tRNA (guanine-N(1)-)-methyltransferase (230 aa).

S-adenosyl-L-methionine is bound by residues Gly-114 and 138–143 (IGDYVL).

This sequence belongs to the RNA methyltransferase TrmD family. Homodimer.

Its subcellular location is the cytoplasm. It catalyses the reaction guanosine(37) in tRNA + S-adenosyl-L-methionine = N(1)-methylguanosine(37) in tRNA + S-adenosyl-L-homocysteine + H(+). Specifically methylates guanosine-37 in various tRNAs. The sequence is that of tRNA (guanine-N(1)-)-methyltransferase from Rhodococcus jostii (strain RHA1).